Here is a 308-residue protein sequence, read N- to C-terminus: Ornithine carbamoyltransferase (308 aa).

Carbamoyl phosphate is bound by residues 56-59 (STRT), Gln-83, Arg-107, and 134-137 (HPCQ). L-ornithine is bound by residues Asn-165, Asp-225, and 229-230 (SM). Carbamoyl phosphate is bound by residues 266–267 (CL) and Arg-294.

Belongs to the aspartate/ornithine carbamoyltransferase superfamily. OTCase family.

It is found in the cytoplasm. The enzyme catalyses carbamoyl phosphate + L-ornithine = L-citrulline + phosphate + H(+). It functions in the pathway amino-acid biosynthesis; L-arginine biosynthesis; L-arginine from L-ornithine and carbamoyl phosphate: step 1/3. Functionally, reversibly catalyzes the transfer of the carbamoyl group from carbamoyl phosphate (CP) to the N(epsilon) atom of ornithine (ORN) to produce L-citrulline. The polypeptide is Ornithine carbamoyltransferase (Cereibacter sphaeroides (strain ATCC 17029 / ATH 2.4.9) (Rhodobacter sphaeroides)).